Here is a 1254-residue protein sequence, read N- to C-terminus: MKLKEINRTAIQAWSPAQQHPIYLAAGTSAQQLDATFSTNASLEIFELDLADSALAMKSCGSFSSPHRYHKLVWGPHGIENQGLPSGVLIAGGENGNIILYDASKIIAGDSEVIISQSEKHTGAVRALDVNSFQSNLVASGGNESEIYIWDLNNFSSPMTPGPKTQPQEDISCVAWNKQVQHILASASPSGKASVWDLRKNDLIIKVSDHSNRMHCSGLAWNPEVATQLVLASEDDRMPVIQMWDLRFATSPLKVLENHTRGILAIAWSVADPELLLSCGKDNRILCWNPNTAEVLYELPTSTQWCFDIQWCPRNPAVLSAAAFDGHISIYSIMGGSNDNANNLQADQLSSSFGNVDPFGTGKTLPPLQLPQQTSPQSTITPLKKPPKWIRRPVGASFAFGGKLVTLDNIKPTAQQPQQTAAHVVHISQVVTETDFIHRSNQLQTTLNAGNFLEYCQNKIETVQNEFERTVWSFLKVNFEEDARLKYLELLGYEKEELALKIASALEGNCKPKEADMDKEEVLAEEEAESDLDDIPVNEEEPVVEETSNTEVPPAPASDAINLKVSQDIDGLITQALLTGDYEAAVNLCLHDNRMADGIILAIAGGPELLAKTQRKYFSKTESKISKLISAVVMKDWLDILETCDLQNWKEALAAVMTYAKPEEFSALCGLLGSRLESSEDVELQAQACLCYICAGTVEQLVSFWTKTQDSCSPLSLQELVEKVVVLQRAVEKAQGAVPADMGALLAEKMNQYASLLASQGSLQTAISYLPTNTEQVSVQQLRERLSRALGQHQHLQQPAAAVTGIQKMHQRRPAAVPMQTYTQPQPPQVPAQPAAPAVPPQYYQQGRSATTVTSWSNQTPTALPSVPRQLVPSSDPQGDSTPPAFGLQSPAMASVPASTPFMYSQQYQNYPPVQQFTPSAGTPGIYQPLPYASSAGAPLPPPPSSSSSAAVYPPQFMLSASSQASAPPQSFCPPPAVSSGGCFQHGGPGSPTSYLPPPGARAPGTQHEPALIPASQRTDGFYQETAWGLEGPQNGWNDPPALSRAAKKKKVPQHFTPPAPITAPIMAPLGDPQAPAGMQTLQPQQQVPDQSAGPATFTPIQQQPLGPRNPSMPQGNMEGAPGAPIGDVIKPLQAIPTEKITKKPIPEEHMVLKTTFEGLIQKCLTAASDPQTKRKLDDAHKRLELLYDKLREQTLSPAIIGGLHNMAQSIECRSYADGLNIHTHIVSNSNFSETSAFMPVLKVVLTQANKLGV.

WD repeat units lie at residues 4–47 (KEIN…EIFE), 64–111 (SSPH…AGDS), 120–160 (KHTG…SPMT), 166–206 (QPQE…LIIK), 209–254 (DHSN…SPLK), 258–298 (NHTR…VLYE), and 301–341 (TSTQ…NDNA). The span at 364 to 383 (TLPPLQLPQQTSPQSTITPL) shows a compositional bias: low complexity. The disordered stretch occupies residues 364–386 (TLPPLQLPQQTSPQSTITPLKKP). Residues 397–428 (SFAFGGKLVTLDNIKPTAQQPQQTAAHVVHIS) form a WD 8; interaction with SEC13 repeat. Disordered stretches follow at residues 818 to 892 (PMQT…QSPA), 983 to 1008 (CFQH…GTQH), and 1058 to 1125 (PPAP…PGAP). Residues 832–846 (AQPAAPAVPPQYYQQ) are compositionally biased toward low complexity. Composition is skewed to polar residues over residues 847–863 (GRSA…TPTA) and 872–881 (VPSSDPQGDS). Over residues 1080 to 1091 (QTLQPQQQVPDQ) the composition is skewed to low complexity.

This sequence belongs to the WD repeat SEC31 family. In terms of assembly, COPII is composed of at least 5 proteins: the SEC23/24 complex, the SEC13/31 complex and SAR1. SEC13 and SEC31 make a 2:2 tetramer that forms the edge element of the COPII outer coat. The tetramer self-assembles in multiple copies to form the complete polyhedral cage. Interacts (via WD 8) with SEC13.

The protein localises to the cytoplasm. It localises to the cytoplasmic vesicle. Its subcellular location is the COPII-coated vesicle membrane. It is found in the endoplasmic reticulum membrane. In terms of biological role, component of the coat protein complex II (COPII) which promotes the formation of transport vesicles from the endoplasmic reticulum (ER). The coat has two main functions, the physical deformation of the endoplasmic reticulum membrane into vesicles and the selection of cargo molecules. This Danio rerio (Zebrafish) protein is Protein transport protein Sec31A (sec31a).